The chain runs to 398 residues: tRNA-specific 2-thiouridylase MnmA (398 aa).

ATP contacts are provided by residues 33-40 (GMSGGVDS) and methionine 59. The interaction with target base in tRNA stretch occupies residues 119 to 121 (NPD). Cysteine 124 acts as the Nucleophile in catalysis. Cysteine 124 and cysteine 226 are disulfide-bonded. Glycine 148 lines the ATP pocket. An interaction with tRNA region spans residues 176 to 178 (KDQ). Cysteine 226 functions as the Cysteine persulfide intermediate in the catalytic mechanism. The segment at 343–344 (RY) is interaction with tRNA.

The protein belongs to the MnmA/TRMU family.

It is found in the cytoplasm. The enzyme catalyses S-sulfanyl-L-cysteinyl-[protein] + uridine(34) in tRNA + AH2 + ATP = 2-thiouridine(34) in tRNA + L-cysteinyl-[protein] + A + AMP + diphosphate + H(+). Functionally, catalyzes the 2-thiolation of uridine at the wobble position (U34) of tRNA, leading to the formation of s(2)U34. This is tRNA-specific 2-thiouridylase MnmA from Psychrobacter sp. (strain PRwf-1).